A 266-amino-acid chain; its full sequence is MALPDFTMHQLLEAGVHFGHQTHRWNPKMTPYIYGQRNNIHIIDLAQTVPLLHQALKLVSDTVARGGRILFVGTKRQASEIIADAANRSAQYYVNARWLGGMLTNWKTISNSIHRLRKLDKILAAEAQGFTKKERLNLERDREKLNRALGGIKDMGSVPDLIFVIDTNKENIALQEAKRLGIPVIAIIDTNCDPDDVTHPIPGNDDASRAISLYCDLFARAALDGIARQQGAMGIDLGAQVDAPVEPVLEEVEPVLEESAVLAVSE.

Belongs to the universal ribosomal protein uS2 family.

The sequence is that of Small ribosomal subunit protein uS2 from Bartonella tribocorum (strain CIP 105476 / IBS 506).